The primary structure comprises 311 residues: Glycine--tRNA ligase alpha subunit (311 aa).

This sequence belongs to the class-II aminoacyl-tRNA synthetase family. As to quaternary structure, tetramer of two alpha and two beta subunits.

It is found in the cytoplasm. It catalyses the reaction tRNA(Gly) + glycine + ATP = glycyl-tRNA(Gly) + AMP + diphosphate. In Bradyrhizobium diazoefficiens (strain JCM 10833 / BCRC 13528 / IAM 13628 / NBRC 14792 / USDA 110), this protein is Glycine--tRNA ligase alpha subunit.